Consider the following 248-residue polypeptide: tRNA (guanine-N(1)-)-methyltransferase (248 aa).

Residues G113 and 133-138 (IGDYVL) each bind S-adenosyl-L-methionine.

This sequence belongs to the RNA methyltransferase TrmD family. Homodimer.

Its subcellular location is the cytoplasm. The enzyme catalyses guanosine(37) in tRNA + S-adenosyl-L-methionine = N(1)-methylguanosine(37) in tRNA + S-adenosyl-L-homocysteine + H(+). Functionally, specifically methylates guanosine-37 in various tRNAs. The protein is tRNA (guanine-N(1)-)-methyltransferase of Shewanella loihica (strain ATCC BAA-1088 / PV-4).